Consider the following 468-residue polypeptide: 3-isopropylmalate dehydratase large subunit (468 aa).

[4Fe-4S] cluster is bound by residues C349, C409, and C412.

The protein belongs to the aconitase/IPM isomerase family. LeuC type 1 subfamily. As to quaternary structure, heterodimer of LeuC and LeuD. [4Fe-4S] cluster serves as cofactor.

The enzyme catalyses (2R,3S)-3-isopropylmalate = (2S)-2-isopropylmalate. The protein operates within amino-acid biosynthesis; L-leucine biosynthesis; L-leucine from 3-methyl-2-oxobutanoate: step 2/4. In terms of biological role, catalyzes the isomerization between 2-isopropylmalate and 3-isopropylmalate, via the formation of 2-isopropylmaleate. This Shewanella baltica (strain OS185) protein is 3-isopropylmalate dehydratase large subunit.